The chain runs to 366 residues: Histidinol-phosphate aminotransferase 2 (366 aa).

Lys-226 carries the N6-(pyridoxal phosphate)lysine modification.

The protein belongs to the class-II pyridoxal-phosphate-dependent aminotransferase family. Histidinol-phosphate aminotransferase subfamily. As to quaternary structure, homodimer. Requires pyridoxal 5'-phosphate as cofactor.

It catalyses the reaction L-histidinol phosphate + 2-oxoglutarate = 3-(imidazol-4-yl)-2-oxopropyl phosphate + L-glutamate. It participates in amino-acid biosynthesis; L-histidine biosynthesis; L-histidine from 5-phospho-alpha-D-ribose 1-diphosphate: step 7/9. The protein is Histidinol-phosphate aminotransferase 2 of Haemophilus influenzae (strain 86-028NP).